Here is a 504-residue protein sequence, read N- to C-terminus: MATLRVDEIHKILRERIEQYNRKVGIENIGRVVQVGDGIARIIGLGEIMSGELVEFAEGTRGIALNLESKNVGIVLMGDGLMIQEGSFVKATGRIAQIPVSEAYLGRVVNALAKPIDGKGEIIASESRLIESPAPSIISRRSVYEPLQTGLIAIDSMIPIGRGQRELIIGDRQTGKTAVATDTILNQKGQGVICVYVAIGQRASSVAQVVTTFHEEGAMEYTIVVAEMADSPATLQYLAPYTGAALAEYFMYRERHTLIIYDDLSKQAQAYRQMSLLLRRPPGREAYPGDVFYLHSRLLERAAKLNSLLGEGSMTALPIVETQSGDVSAYIPTNVISITDGQIFLSADLFNAGIRPAINVGISVSRVGSAAQIKAMKQVAGKSKLELAQFAELQAFAQFASALDKTSQNQLARGRRLRELLKQSQANPLPVEEQIATIYTGTRGYLDSLEIEQVNKFLDELRKHLKDTKPQFQEIISSSKTFTEQAEILLKEAIQEQLERFSLQ.

ATP is bound at residue 170-177 (GDRQTGKT).

The protein belongs to the ATPase alpha/beta chains family. F-type ATPases have 2 components, CF(1) - the catalytic core - and CF(0) - the membrane proton channel. CF(1) has five subunits: alpha(3), beta(3), gamma(1), delta(1), epsilon(1). CF(0) has four main subunits: a, b, b' and c.

It is found in the plastid. The protein resides in the chloroplast thylakoid membrane. It catalyses the reaction ATP + H2O + 4 H(+)(in) = ADP + phosphate + 5 H(+)(out). Produces ATP from ADP in the presence of a proton gradient across the membrane. The alpha chain is a regulatory subunit. The sequence is that of ATP synthase subunit alpha, chloroplastic from Triticum aestivum (Wheat).